We begin with the raw amino-acid sequence, 366 residues long: Protein RecA (366 aa).

Residue 77–84 (GPESSGKT) participates in ATP binding. Residues 346–366 (IGGPGGEDDDAGGAAGVGDEA) form a disordered region.

Belongs to the RecA family.

It localises to the cytoplasm. Can catalyze the hydrolysis of ATP in the presence of single-stranded DNA, the ATP-dependent uptake of single-stranded DNA by duplex DNA, and the ATP-dependent hybridization of homologous single-stranded DNAs. It interacts with LexA causing its activation and leading to its autocatalytic cleavage. In Rhodospirillum rubrum (strain ATCC 11170 / ATH 1.1.1 / DSM 467 / LMG 4362 / NCIMB 8255 / S1), this protein is Protein RecA.